Consider the following 574-residue polypeptide: Proline--tRNA ligase (574 aa).

Belongs to the class-II aminoacyl-tRNA synthetase family. ProS type 1 subfamily. As to quaternary structure, homodimer.

It localises to the cytoplasm. It carries out the reaction tRNA(Pro) + L-proline + ATP = L-prolyl-tRNA(Pro) + AMP + diphosphate. In terms of biological role, catalyzes the attachment of proline to tRNA(Pro) in a two-step reaction: proline is first activated by ATP to form Pro-AMP and then transferred to the acceptor end of tRNA(Pro). As ProRS can inadvertently accommodate and process non-cognate amino acids such as alanine and cysteine, to avoid such errors it has two additional distinct editing activities against alanine. One activity is designated as 'pretransfer' editing and involves the tRNA(Pro)-independent hydrolysis of activated Ala-AMP. The other activity is designated 'posttransfer' editing and involves deacylation of mischarged Ala-tRNA(Pro). The misacylated Cys-tRNA(Pro) is not edited by ProRS. In Ralstonia pickettii (strain 12J), this protein is Proline--tRNA ligase.